Consider the following 352-residue polypeptide: Histidinol-phosphate aminotransferase (352 aa).

The residue at position 211 (Lys211) is an N6-(pyridoxal phosphate)lysine.

Belongs to the class-II pyridoxal-phosphate-dependent aminotransferase family. Histidinol-phosphate aminotransferase subfamily. As to quaternary structure, homodimer. Pyridoxal 5'-phosphate is required as a cofactor.

It catalyses the reaction L-histidinol phosphate + 2-oxoglutarate = 3-(imidazol-4-yl)-2-oxopropyl phosphate + L-glutamate. It functions in the pathway amino-acid biosynthesis; L-histidine biosynthesis; L-histidine from 5-phospho-alpha-D-ribose 1-diphosphate: step 7/9. The polypeptide is Histidinol-phosphate aminotransferase (Haemophilus influenzae (strain PittGG)).